Reading from the N-terminus, the 297-residue chain is Bifunctional protein FolD 1 (297 aa).

NADP(+) is bound by residues 164–166 and Thr230; that span reads GRS.

It belongs to the tetrahydrofolate dehydrogenase/cyclohydrolase family. As to quaternary structure, homodimer.

The catalysed reaction is (6R)-5,10-methylene-5,6,7,8-tetrahydrofolate + NADP(+) = (6R)-5,10-methenyltetrahydrofolate + NADPH. The enzyme catalyses (6R)-5,10-methenyltetrahydrofolate + H2O = (6R)-10-formyltetrahydrofolate + H(+). Its pathway is one-carbon metabolism; tetrahydrofolate interconversion. Catalyzes the oxidation of 5,10-methylenetetrahydrofolate to 5,10-methenyltetrahydrofolate and then the hydrolysis of 5,10-methenyltetrahydrofolate to 10-formyltetrahydrofolate. The polypeptide is Bifunctional protein FolD 1 (Rhodococcus jostii (strain RHA1)).